A 326-amino-acid chain; its full sequence is Neuferricin homolog (326 aa).

The N-terminal stretch at 1–34 (MDKNRRRTDDAGLMTKTLAGIAALVFFLSFICSS) is a signal peptide. Residues 98-197 (KHVFTPEQLH…KEYPLVGVVA (100 aa)) form the Cytochrome b5 heme-binding domain.

The protein belongs to the cytochrome b5 family. MAPR subfamily.

The protein localises to the secreted. Heme-binding protein. This Caenorhabditis elegans protein is Neuferricin homolog (tag-131).